We begin with the raw amino-acid sequence, 99 residues long: Nucleoid-associated protein EbfC (99 aa).

The protein belongs to the YbaB/EbfC family. In terms of assembly, homodimer.

The protein localises to the cytoplasm. It localises to the nucleoid. Functionally, binds to DNA and alters its conformation. May be involved in regulation of gene expression, nucleoid organization and DNA protection. The chain is Nucleoid-associated protein EbfC from Borreliella burgdorferi (strain ZS7) (Borrelia burgdorferi).